The chain runs to 45 residues: Monellin chain A (45 aa).

In terms of assembly, heterodimer of an A chain and a B chain.

Taste-modifying protein; intensely sweet-tasting protein. The chain is Monellin chain A from Dioscoreophyllum cumminsii (Serendipity berry).